Reading from the N-terminus, the 239-residue chain is Small ribosomal subunit protein uS2 (239 aa).

The protein belongs to the universal ribosomal protein uS2 family.

This chain is Small ribosomal subunit protein uS2, found in Francisella tularensis subsp. tularensis (strain WY96-3418).